A 145-amino-acid chain; its full sequence is UPF0201 protein Saci_1285 (145 aa).

The protein belongs to the UPF0201 family.

In Sulfolobus acidocaldarius (strain ATCC 33909 / DSM 639 / JCM 8929 / NBRC 15157 / NCIMB 11770), this protein is UPF0201 protein Saci_1285.